Here is a 241-residue protein sequence, read N- to C-terminus: Methylthioribulose-1-phosphate dehydratase (241 aa).

Basic and acidic residues predominate over residues 1–12 (MSQEITQKDNND). Positions 1-22 (MSQEITQKDNNDHLVQSSDPDH) are disordered. Position 101 (C101) interacts with substrate. 2 residues coordinate Zn(2+): H118 and H120. The Proton donor/acceptor role is filled by E147. Residue H203 participates in Zn(2+) binding.

The protein belongs to the aldolase class II family. MtnB subfamily. It depends on Zn(2+) as a cofactor.

The protein resides in the cytoplasm. The catalysed reaction is 5-(methylsulfanyl)-D-ribulose 1-phosphate = 5-methylsulfanyl-2,3-dioxopentyl phosphate + H2O. Its pathway is amino-acid biosynthesis; L-methionine biosynthesis via salvage pathway; L-methionine from S-methyl-5-thio-alpha-D-ribose 1-phosphate: step 2/6. Catalyzes the dehydration of methylthioribulose-1-phosphate (MTRu-1-P) into 2,3-diketo-5-methylthiopentyl-1-phosphate (DK-MTP-1-P). This Aspergillus terreus (strain NIH 2624 / FGSC A1156) protein is Methylthioribulose-1-phosphate dehydratase.